The primary structure comprises 75 residues: Dermaseptin-SP3 (75 aa).

Positions 1–22 (MAFLKKSLFLVLFLGLVSLSMC) are cleaved as a signal peptide. A propeptide spanning residues 23–45 (EEEKRENEVEEEQEDDEQSELRR) is cleaved from the precursor. P72 bears the Proline amide mark. A propeptide spanning residues 74–75 (EQ) is cleaved from the precursor.

This sequence belongs to the frog skin active peptide (FSAP) family. Dermaseptin subfamily. Expressed by the skin glands.

It localises to the secreted. Its subcellular location is the target cell membrane. Antimicrobial peptide with activity against Gram-positive and Gram-negative bacteria and fungi. Has been tested against E.coli (MIC=47.50-128 uM), S.aureus (MIC=189.98-512 uM), K.pneumoniae (MIC&gt;189.98 uM) and C.albicans (MIC&gt;189.98 uM). Probably acts by disturbing membrane functions with its alpha-helical amphipathic structure. May penetrate bacterial membranes, but stay at the mammalian membrane surface. Shows a very weak hemolytic activity. This is Dermaseptin-SP3 from Agalychnis spurrelli (Gliding leaf frog).